The chain runs to 634 residues: Ankyrin repeat protein OPG025 (634 aa).

ANK repeat units lie at residues 36-69 (DGETPLKAYVTKKNNNIKNDVVILLLSSVDYKNI), 70-100 (NDFDIFEYLCSDNIDIDLLKLLISKGIEINS), 103-134 (NGINIVEKYATTSNPNVDVFKLLLDKGIPTCS), 175-211 (MGKTVLYYYIITRSQDGYATSLDVINYLISHKKEMRY), 307-337 (IQDLLLEYVSYHTVYINVIKCMIDEGATLYR), and 412-441 (HGCSILYHCIKSHSVSLVEWLIDNGADINI).

It belongs to the orthopoxvirus OPG025 family. As to quaternary structure, interacts with components of host SCF complex CUL1 and SKP1 and components of the cullin deneddylation/COP9 signalosome complex subunits COPS7A and COPS7B.

Its function is as follows. Plays a role in the inhibition of host immune repsonse by counteracting the action of interferons on early events in the viral replication cycle. This Vaccinia virus (strain Copenhagen) (VACV) protein is Ankyrin repeat protein OPG025 (OPG025).